Consider the following 291-residue polypeptide: MASKSKQHLRYQPRKSVSRSTQAFTVLILLLVVILILLGLGILSLPNANRNSSKTNDLTNIVRKSETSSGDEEGNGERWVEVISWEPRAVVYHNFLTNEECEHLISLAKPSMVKSTVVDEKTGGSKDSRVRTSSGTFLRRGHDEVVEVIEKRISDFTFIPVENGEGLQVLHYQVGQKYEPHYDYFLDEFNTKNGGQRIATVLMYLSDVDDGGETVFPAARGNISAVPWWNELSKCGKEGLSVLPKKRDALLFWNMRPDASLDPSSLHGGCPVVKGNKWSSTKWFHVHEFKV.

Topologically, residues 1–22 (MASKSKQHLRYQPRKSVSRSTQ) are cytoplasmic. The chain crosses the membrane as a helical; Signal-anchor for type II membrane protein span at residues 23-43 (AFTVLILLLVVILILLGLGIL). Residues 44-291 (SLPNANRNSS…KWFHVHEFKV (248 aa)) are Extracellular-facing. Asparagine 51 carries N-linked (GlcNAc...) asparagine glycosylation. Positions 163–286 (NGEGLQVLHY…KWSSTKWFHV (124 aa)) constitute a Fe2OG dioxygenase domain. Fe cation contacts are provided by histidine 181 and aspartate 183. Residue asparagine 222 is glycosylated (N-linked (GlcNAc...) asparagine). Fe cation is bound at residue histidine 267. Lysine 277 provides a ligand contact to 2-oxoglutarate.

The protein belongs to the P4HA family. Fe(2+) is required as a cofactor. It depends on L-ascorbate as a cofactor. As to expression, expressed in epidermal root hair cells (trichoblasts).

It localises to the endoplasmic reticulum membrane. It is found in the golgi apparatus membrane. The enzyme catalyses L-prolyl-[collagen] + 2-oxoglutarate + O2 = trans-4-hydroxy-L-prolyl-[collagen] + succinate + CO2. Catalyzes the post-translational formation of 4-hydroxyproline in -Xaa-Pro-Gly- sequences in proline-rich peptide sequences of plant glycoproteins and other proteins. Hydroxyprolines are important constituent of many plant cell wall glycoproteins such as extensins, hydroxyproline-rich glycoproteins, lectins and arabinogalactan proteins. Possesses high affinity for leucine-rich repeat and proline-rich extensins of root cell walls that are essential for root hair development. Hydroxyprolines define the subsequent O-glycosylation sites by arabinosyltransferases which elongate the O-arabinosides on extensins. The sequence is that of Prolyl 4-hydroxylase 5 from Arabidopsis thaliana (Mouse-ear cress).